The primary structure comprises 598 residues: Elongation factor 4 (598 aa).

The tr-type G domain maps to N2 to Q184. Residues D14–T19 and N131–D134 contribute to the GTP site.

It belongs to the TRAFAC class translation factor GTPase superfamily. Classic translation factor GTPase family. LepA subfamily.

The protein localises to the cell membrane. The enzyme catalyses GTP + H2O = GDP + phosphate + H(+). Functionally, required for accurate and efficient protein synthesis under certain stress conditions. May act as a fidelity factor of the translation reaction, by catalyzing a one-codon backward translocation of tRNAs on improperly translocated ribosomes. Back-translocation proceeds from a post-translocation (POST) complex to a pre-translocation (PRE) complex, thus giving elongation factor G a second chance to translocate the tRNAs correctly. Binds to ribosomes in a GTP-dependent manner. This chain is Elongation factor 4, found in Wolbachia sp. subsp. Drosophila simulans (strain wRi).